The following is a 462-amino-acid chain: Squalene synthase LSS (462 aa).

R48 and R73 together coordinate NADP(+). Mg(2+) contacts are provided by D76, E79, and D80. R214, K314, and R316 together coordinate NADP(+). Helical transmembrane passes span 399-419 (LVLVLGLGYCVYAFNLLPLLW) and 436-456 (LGLPHQIIAVFCVLTAGYQVF).

It belongs to the phytoene/squalene synthase family. Mg(2+) serves as cofactor.

Its subcellular location is the membrane. It carries out the reaction 2 (2E,6E)-farnesyl diphosphate + NADH + H(+) = squalene + 2 diphosphate + NAD(+). It catalyses the reaction 2 (2E,6E)-farnesyl diphosphate + NADPH + H(+) = squalene + 2 diphosphate + NADP(+). Its function is as follows. Converts farnesyl diphosphate (FPP) into squalene, a precursor for sterol biosynthesis in eukaryotes. The polypeptide is Squalene synthase LSS (Botryococcus braunii (Green alga)).